Here is a 110-residue protein sequence, read N- to C-terminus: uncharacterized protein (110 aa).

A run of 2 helical transmembrane segments spans residues Val-6–Val-26 and Thr-38–Pro-58.

The protein localises to the membrane. This is an uncharacterized protein from Saccharomyces cerevisiae (strain ATCC 204508 / S288c) (Baker's yeast).